A 770-amino-acid chain; its full sequence is Protein PAT1 homolog 1 (770 aa).

The segment at 1 to 42 (MFRYESLEDCPLDEDEDAFQGLGEEDEEIDQFNDDTFGSGAV) is disordered. Residues 1–84 (MFRYESLEDC…EMDLLGDHEE (84 aa)) are region A; interaction with DDX6/RCK. An involved in nuclear foci localization region spans residues 1-397 (MFRYESLEDC…HQSSHQDHLR (397 aa)). The segment covering 7–33 (LEDCPLDEDEDAFQGLGEEDEEIDQFN) has biased composition (acidic residues). Residues 85–388 (NLAERLSKMV…LNGTGDRGGH (304 aa)) form a region N; interaction with decapping machinery region. The short motif at 86–95 (LAERLSKMVI) is the Nuclear export signal element. The tract at residues 155–195 (PQRPLQGPEDDRDLSERALPRRSTSPIIGSPPVRAVPIGTP) is disordered. Ser177 is subject to Phosphoserine. Position 178 is a phosphothreonine (Thr178). A phosphoserine mark is found at Ser179 and Ser184. At Thr194 the chain carries Phosphothreonine. An asymmetric dimethylarginine mark is found at Arg217, Arg223, and Arg263. The interval 223 to 397 (RYPAPYGERI…HQSSHQDHLR (175 aa)) is involved in RNA-binding. Ser278 bears the Phosphoserine mark. Arg284 is subject to Asymmetric dimethylarginine. Disordered regions lie at residues 319–340 (FSAP…GPHL) and 376–396 (HRNL…QDHL). A compositionally biased stretch (pro residues) spans 321–337 (APPPATPPPQQHPPGPG). Omega-N-methylarginine is present on Arg385. Over residues 385 to 396 (RGGHQSSHQDHL) the composition is skewed to basic and acidic residues. Residues 389-448 (QSSHQDHLRKDPYANLMLQREKDWVSKIQMMQLQSTDPYLDDFYYQNYFEKLEKLSAAEE) form a region H region. Residues 398-770 (KDPYANLMLQ…TKLQLVQGIR (373 aa)) are involved in nuclear speckle localization. Residues 449-770 (IQGDGPKKER…TKLQLVQGIR (322 aa)) are region C.

This sequence belongs to the PAT1 family. Interacts (via region A) with DDX6/RCK. Interacts (via region H and region C) with LSM1 and LSM4. Interacts (via region N) with DCP1A, DCP2, EDC3, EDC4 and XRN1. Interacts with the CCR4-NOT complex. Interacts with the Lsm-containing SMN-Sm protein complex. Interacts with EIF4ENIF1/4E-T.

The protein localises to the cytoplasm. It localises to the P-body. It is found in the nucleus. Its subcellular location is the PML body. The protein resides in the nucleus speckle. Functionally, RNA-binding protein involved in deadenylation-dependent decapping of mRNAs, leading to the degradation of mRNAs. Acts as a scaffold protein that connects deadenylation and decapping machinery. Required for cytoplasmic mRNA processing body (P-body) assembly. In Mus musculus (Mouse), this protein is Protein PAT1 homolog 1 (Patl1).